A 348-amino-acid polypeptide reads, in one-letter code: uncharacterized protein (348 aa).

NADP(+) contacts are provided by K41 and Y170. S339 carries the phosphoserine modification.

Belongs to the NAD(P)-dependent epimerase/dehydratase family. Dihydroflavonol-4-reductase subfamily.

This is an uncharacterized protein from Saccharomyces cerevisiae (strain ATCC 204508 / S288c) (Baker's yeast).